A 302-amino-acid chain; its full sequence is TATA-box-binding protein (302 aa).

Disordered regions lie at residues 1–22 and 50–81; these read MEQNNSLPPFAQGLASPQGAMT and SLLEEQQRQQQQQQAASQQQGGMVGGSGQTPQ. A compositionally biased stretch (low complexity) spans 50–70; it reads SLLEEQQRQQQQQQAASQQQG. Tandem repeats lie at residues 128–204 and 218–295.

It belongs to the TBP family. In terms of tissue distribution, enriched in testis but hardly detectable in the ovary (at protein level).

The protein localises to the nucleus. Its function is as follows. General transcription factor that functions at the core of the DNA-binding multiprotein factor TFIID. Binding of TFIID to the TATA box is the initial transcriptional step of the pre-initiation complex (PIC), playing a role in the activation of eukaryotic genes transcribed by RNA polymerase II. Members of the TBP family are differentially required for transcription and development during early embryogenesis. Regulates mRNA levels in the early embryo by both transcriptional and post-transcriptional mechanisms. Required for transcription of a subset of genes at the mid-blastula transition (MBT). Negatively regulates the expression of other embryonic genes, including autoregulation of the tbp promoter itself. Also functions within a transcription-dependent mechanism to direct the temporally-regulated degradation of a subset of maternal mRNAs after the MBT. This is part of a general mechanism to regulate the maternal to zygotic transition and is required for normal embryonic development. Binds to promoters of a subset of genes. Required for gastrulation. This is TATA-box-binding protein from Danio rerio (Zebrafish).